Here is a 329-residue protein sequence, read N- to C-terminus: GTP 3',8-cyclase (329 aa).

Residues 8–234 form the Radical SAM core domain; sequence AFARKFYYLR…QLRQRSDGPA (227 aa). Arg17 provides a ligand contact to GTP. [4Fe-4S] cluster is bound by residues Cys24 and Cys28. S-adenosyl-L-methionine is bound at residue Tyr30. Cys31 contacts [4Fe-4S] cluster. Arg68 is a GTP binding site. Gly72 is an S-adenosyl-L-methionine binding site. A GTP-binding site is contributed by Thr99. Residue Ser123 participates in S-adenosyl-L-methionine binding. Lys160 serves as a coordination point for GTP. Residue Met194 participates in S-adenosyl-L-methionine binding. The [4Fe-4S] cluster site is built by Cys257 and Cys260. 262 to 264 serves as a coordination point for GTP; the sequence is RLR. Cys274 provides a ligand contact to [4Fe-4S] cluster.

This sequence belongs to the radical SAM superfamily. MoaA family. Monomer and homodimer. [4Fe-4S] cluster is required as a cofactor.

It catalyses the reaction GTP + AH2 + S-adenosyl-L-methionine = (8S)-3',8-cyclo-7,8-dihydroguanosine 5'-triphosphate + 5'-deoxyadenosine + L-methionine + A + H(+). It functions in the pathway cofactor biosynthesis; molybdopterin biosynthesis. Catalyzes the cyclization of GTP to (8S)-3',8-cyclo-7,8-dihydroguanosine 5'-triphosphate. The chain is GTP 3',8-cyclase from Shigella dysenteriae serotype 1 (strain Sd197).